A 236-amino-acid polypeptide reads, in one-letter code: Small ribosomal subunit protein uS5 (236 aa).

The S5 DRBM domain occupies 61-124; that stretch reads ENQEIIDIAL…NYAKLNIIEI (64 aa).

The protein belongs to the universal ribosomal protein uS5 family. Part of the 30S ribosomal subunit. Contacts protein S4.

In terms of biological role, with S4 and S12 plays an important role in translational accuracy. The sequence is that of Small ribosomal subunit protein uS5 from Pyrococcus horikoshii (strain ATCC 700860 / DSM 12428 / JCM 9974 / NBRC 100139 / OT-3).